Consider the following 442-residue polypeptide: Hydroxycinnamoyltransferase 1 (442 aa).

Catalysis depends on proton acceptor residues H159 and D389.

Belongs to the plant acyltransferase family. Expressed in roots, leaves, stems and seeds.

Its function is as follows. Hydroxycinnamoyl transferase that catalyzes the transfer of an acyl from p-coumaryol-CoA to various acyl acceptors. Can use feruloyl-CoA and caffeoyl-CoA as acyl donors. The polypeptide is Hydroxycinnamoyltransferase 1 (Oryza sativa subsp. japonica (Rice)).